Here is a 362-residue protein sequence, read N- to C-terminus: Chorismate synthase (362 aa).

A disordered region spans residues 39–59 (ADLQGDLDRRKPGTSRYTTPR). 2 residues coordinate NADP(+): Arg48 and Arg54. Residues 125–127 (RSS), 238–239 (NA), Gly278, 293–297 (KPTSS), and Arg319 contribute to the FMN site.

Belongs to the chorismate synthase family. In terms of assembly, homotetramer. Requires FMNH2 as cofactor.

It catalyses the reaction 5-O-(1-carboxyvinyl)-3-phosphoshikimate = chorismate + phosphate. Its pathway is metabolic intermediate biosynthesis; chorismate biosynthesis; chorismate from D-erythrose 4-phosphate and phosphoenolpyruvate: step 7/7. Its function is as follows. Catalyzes the anti-1,4-elimination of the C-3 phosphate and the C-6 proR hydrogen from 5-enolpyruvylshikimate-3-phosphate (EPSP) to yield chorismate, which is the branch point compound that serves as the starting substrate for the three terminal pathways of aromatic amino acid biosynthesis. This reaction introduces a second double bond into the aromatic ring system. This Aeromonas hydrophila subsp. hydrophila (strain ATCC 7966 / DSM 30187 / BCRC 13018 / CCUG 14551 / JCM 1027 / KCTC 2358 / NCIMB 9240 / NCTC 8049) protein is Chorismate synthase.